Consider the following 140-residue polypeptide: Nucleoside diphosphate kinase (140 aa).

Lys-11, Phe-59, Arg-87, Thr-93, Arg-104, and Asn-114 together coordinate ATP. The Pros-phosphohistidine intermediate role is filled by His-117.

Belongs to the NDK family. As to quaternary structure, homotetramer. The cofactor is Mg(2+).

The protein localises to the cytoplasm. It catalyses the reaction a 2'-deoxyribonucleoside 5'-diphosphate + ATP = a 2'-deoxyribonucleoside 5'-triphosphate + ADP. The enzyme catalyses a ribonucleoside 5'-diphosphate + ATP = a ribonucleoside 5'-triphosphate + ADP. In terms of biological role, major role in the synthesis of nucleoside triphosphates other than ATP. The ATP gamma phosphate is transferred to the NDP beta phosphate via a ping-pong mechanism, using a phosphorylated active-site intermediate. This is Nucleoside diphosphate kinase from Beijerinckia indica subsp. indica (strain ATCC 9039 / DSM 1715 / NCIMB 8712).